A 100-amino-acid chain; its full sequence is Urease subunit gamma (100 aa).

The protein belongs to the urease gamma subunit family. Heterotrimer of UreA (gamma), UreB (beta) and UreC (alpha) subunits. Three heterotrimers associate to form the active enzyme.

It is found in the cytoplasm. The catalysed reaction is urea + 2 H2O + H(+) = hydrogencarbonate + 2 NH4(+). The protein operates within nitrogen metabolism; urea degradation; CO(2) and NH(3) from urea (urease route): step 1/1. In Staphylococcus epidermidis (strain ATCC 35984 / DSM 28319 / BCRC 17069 / CCUG 31568 / BM 3577 / RP62A), this protein is Urease subunit gamma.